Consider the following 613-residue polypeptide: Dihydroxy-acid dehydratase (613 aa).

D81 contacts Mg(2+). C122 contacts [2Fe-2S] cluster. Residues D123 and K124 each coordinate Mg(2+). K124 is modified (N6-carboxylysine). C195 serves as a coordination point for [2Fe-2S] cluster. Mg(2+) is bound at residue E491. S517 (proton acceptor) is an active-site residue.

Belongs to the IlvD/Edd family. As to quaternary structure, homodimer. Requires [2Fe-2S] cluster as cofactor. Mg(2+) serves as cofactor.

The enzyme catalyses (2R)-2,3-dihydroxy-3-methylbutanoate = 3-methyl-2-oxobutanoate + H2O. It carries out the reaction (2R,3R)-2,3-dihydroxy-3-methylpentanoate = (S)-3-methyl-2-oxopentanoate + H2O. Its pathway is amino-acid biosynthesis; L-isoleucine biosynthesis; L-isoleucine from 2-oxobutanoate: step 3/4. The protein operates within amino-acid biosynthesis; L-valine biosynthesis; L-valine from pyruvate: step 3/4. Functionally, functions in the biosynthesis of branched-chain amino acids. Catalyzes the dehydration of (2R,3R)-2,3-dihydroxy-3-methylpentanoate (2,3-dihydroxy-3-methylvalerate) into 2-oxo-3-methylpentanoate (2-oxo-3-methylvalerate) and of (2R)-2,3-dihydroxy-3-methylbutanoate (2,3-dihydroxyisovalerate) into 2-oxo-3-methylbutanoate (2-oxoisovalerate), the penultimate precursor to L-isoleucine and L-valine, respectively. This chain is Dihydroxy-acid dehydratase, found in Vibrio vulnificus (strain YJ016).